Here is a 130-residue protein sequence, read N- to C-terminus: Single-stranded DNA-binding protein 1 (130 aa).

An SSB domain is found at M1–E104. Residues N108–F130 form a disordered region.

As to quaternary structure, homotetramer.

This is Single-stranded DNA-binding protein 1 (ssb1) from Streptococcus pyogenes serotype M18 (strain MGAS8232).